A 187-amino-acid polypeptide reads, in one-letter code: Small ribosomal subunit protein uS7 (187 aa).

It belongs to the universal ribosomal protein uS7 family. Part of the 30S ribosomal subunit.

Its function is as follows. One of the primary rRNA binding proteins, it binds directly to 16S rRNA where it nucleates assembly of the head domain of the 30S subunit. Is located at the subunit interface close to the decoding center. The chain is Small ribosomal subunit protein uS7 from Picrophilus torridus (strain ATCC 700027 / DSM 9790 / JCM 10055 / NBRC 100828 / KAW 2/3).